The following is a 236-amino-acid chain: Uridylate kinase (236 aa).

Residue 10–13 (KLSG) participates in ATP binding. Glycine 52 contacts UMP. ATP is bound by residues glycine 53 and arginine 57. Residues aspartate 72 and 133–140 (TGNPFFTT) each bind UMP. Residues threonine 160, tyrosine 166, and aspartate 169 each coordinate ATP.

The protein belongs to the UMP kinase family. As to quaternary structure, homohexamer.

It is found in the cytoplasm. The catalysed reaction is UMP + ATP = UDP + ADP. It functions in the pathway pyrimidine metabolism; CTP biosynthesis via de novo pathway; UDP from UMP (UMPK route): step 1/1. Inhibited by UTP. Its function is as follows. Catalyzes the reversible phosphorylation of UMP to UDP. The chain is Uridylate kinase from Cupriavidus pinatubonensis (strain JMP 134 / LMG 1197) (Cupriavidus necator (strain JMP 134)).